The sequence spans 512 residues: Cytochrome P450 98A1 (512 aa).

The chain crosses the membrane as a helical span at residues 3–23 (ASLLLSVALAVVLIPLSLALL). C441 is a heme binding site.

It belongs to the cytochrome P450 family. Requires heme as cofactor.

It localises to the membrane. In Sorghum bicolor (Sorghum), this protein is Cytochrome P450 98A1 (CYP98A1).